Here is a 339-residue protein sequence, read N- to C-terminus: Probable cytosolic iron-sulfur protein assembly protein CIAO1 (339 aa).

7 WD repeats span residues 14-53, 59-98, 103-142, 148-187, 192-231, 250-289, and 301-339; these read HPDS…WICK, GHQR…FECV, GHEN…EYEC, SHTQ…WVCC, GHES…NEQG, FHTR…DPQQ, and AHSQ…PAGL. Positions 176-178 match the LYR motif; required for interaction with HSC20 motif; the sequence is LYQ.

This sequence belongs to the WD repeat CIA1 family. Component of the CIA complex. Interacts with CIAO2A and forms a complex with CIAO2B and MMS19; the interactions with CIAO2A and CIAO2B are mutually exclusive. Interacts with CHD1L, ERCC2, IREB2 and POLD1. Component of the MMXD complex, which includes CIAO1, ERCC2, CIAO2B, MMS19 and SLC25A5. Interacts with WT1. Interacts with CIAO3. Interacts (via LYR motif) with HSC20.

Its subcellular location is the cytoplasm. Key component of the cytosolic iron-sulfur protein assembly (CIA) complex, a multiprotein complex that mediates the incorporation of iron-sulfur cluster into extramitochondrial Fe/S proteins. As a CIA complex component, interacts specifically with CIAO2A or CIAO2B and MMS19 to assist different branches of iron-sulfur protein assembly, depending of its interactors. The complex CIAO1:CIAO2B:MMS19 binds to and facilitates the assembly of most cytosolic-nuclear Fe/S proteins. CIAO1:CIAO2A specifically matures ACO1 and stabilizes IREB2. Seems to specifically modulate the transactivation activity of WT1. As part of the mitotic spindle-associated MMXD complex it may play a role in chromosome segregation. The chain is Probable cytosolic iron-sulfur protein assembly protein CIAO1 from Mus musculus (Mouse).